Here is a 239-residue protein sequence, read N- to C-terminus: MRPSGRKTDQMRKISFERNFSKHAEGSCLVKFGDTHVLCTASLEDRTPPWLRNTGKGWVTAEYGMLPRATGERIKREASSGKQSGRTQEIQRLIGRSLRAVVDLEALGERQISLDCDVIQADGGTRTASITGAWIALHDCLKWMESRNIIKVDRVLKDHVAAISCGIFAAQPVIDLDYLEDSAAETDANFVMTGTGGIVEIQGTAEGKPFSQEEFLTLLGLAQTGIAELVDLQKQAIAG.

Residues Arg-86 and 124–126 (GTR) contribute to the phosphate site.

This sequence belongs to the RNase PH family. As to quaternary structure, homohexameric ring arranged as a trimer of dimers.

It catalyses the reaction tRNA(n+1) + phosphate = tRNA(n) + a ribonucleoside 5'-diphosphate. Functionally, phosphorolytic 3'-5' exoribonuclease that plays an important role in tRNA 3'-end maturation. Removes nucleotide residues following the 3'-CCA terminus of tRNAs; can also add nucleotides to the ends of RNA molecules by using nucleoside diphosphates as substrates, but this may not be physiologically important. Probably plays a role in initiation of 16S rRNA degradation (leading to ribosome degradation) during starvation. This is Ribonuclease PH from Allorhizobium ampelinum (strain ATCC BAA-846 / DSM 112012 / S4) (Agrobacterium vitis (strain S4)).